A 230-amino-acid chain; its full sequence is MSTIAENIAKVAARIREAAQAAGRDPATVGLLAVSKTKPAAAVREAHAAGLRDFGENYLQEALGKQAELADLPLNWHFIGPIQSNKTRPIAEHFQWVHSVDRLKIAQRLSEQRPAGLPPLNVCLQVNVSGEASKSGCAPEDLPALAEAVKQLPNLRLRGLMAIPEPTAERAAQHAAFARLRELLLDLNLGLDTLSMGMSDDLEAAIGEGATWVRIGTALFGARDYGAPAS.

Lys36 carries the post-translational modification N6-(pyridoxal phosphate)lysine.

Belongs to the pyridoxal phosphate-binding protein YggS/PROSC family.

Functionally, perhaps involved in proline biosynthesis. Its function is as follows. Pyridoxal 5'-phosphate (PLP)-binding protein, which is involved in PLP homeostasis. The sequence is that of Pyridoxal phosphate homeostasis protein from Pseudomonas aeruginosa (strain ATCC 15692 / DSM 22644 / CIP 104116 / JCM 14847 / LMG 12228 / 1C / PRS 101 / PAO1).